An 85-amino-acid chain; its full sequence is Transcription factor 4 (85 aa).

The 54-residue stretch at 7 to 60 (ERRMANNARERLRVRDINEAFKELGRMVQLHLKSDKPQTKLLILHQAVAVILSL) folds into the bHLH domain. The class A specific domain stretch occupies residues 62-85 (QQVRERNLNPKAACLKRREEEKVS).

Efficient DNA binding requires dimerization with another bHLH protein. Forms homo- or heterooligomers with myogenin.

It localises to the nucleus. Transcription factor that binds to the immunoglobulin enhancer Mu-E5/KE5-motif. Involved in the initiation of neuronal differentiation. Binds to the E-box present in the somatostatin receptor 2 initiator element (SSTR2-INR) to activate transcription. The polypeptide is Transcription factor 4 (TCF4) (Gallus gallus (Chicken)).